A 180-amino-acid chain; its full sequence is MLKLLSEIGPVIAFFAGFFYGGGIQHATLYMLITSVICITLCYVIDKKVSKLSIISTTVLLVSGSITLISGNSMYIKIKPTILYVIFGIIFLMSGIRKNPFIKYALESIVRLKEESWITLSYRTAAFFFFMAVVNEVVWRNFSDETWVKFKVFGVIPITVIFILLQLPLLLKNKLPDSKI.

6 helical membrane-spanning segments follow: residues 4 to 24 (LLSEIGPVIAFFAGFFYGGGI), 25 to 45 (QHATLYMLITSVICITLCYVI), 52 to 72 (LSIISTTVLLVSGSITLISGN), 76 to 96 (IKIKPTILYVIFGIIFLMSGI), 118 to 138 (ITLSYRTAAFFFFMAVVNEVV), and 150 to 170 (FKVFGVIPITVIFILLQLPLL).

It belongs to the YciB family.

It localises to the cell inner membrane. In terms of biological role, plays a role in cell envelope biogenesis, maintenance of cell envelope integrity and membrane homeostasis. This Rickettsia massiliae (strain Mtu5) protein is Inner membrane-spanning protein YciB.